We begin with the raw amino-acid sequence, 90 residues long: Putative regulatory protein NT01CX_2250 (90 aa).

It belongs to the RemA family.

This is Putative regulatory protein NT01CX_2250 from Clostridium novyi (strain NT).